The following is a 62-amino-acid chain: Photosystem II reaction center protein Z (62 aa).

2 consecutive transmembrane segments (helical) span residues 8–28 and 41–61; these read AVFA…VVFA and FSGT…NSLI.

The protein belongs to the PsbZ family. As to quaternary structure, PSII is composed of 1 copy each of membrane proteins PsbA, PsbB, PsbC, PsbD, PsbE, PsbF, PsbH, PsbI, PsbJ, PsbK, PsbL, PsbM, PsbT, PsbY, PsbZ, Psb30/Ycf12, at least 3 peripheral proteins of the oxygen-evolving complex and a large number of cofactors. It forms dimeric complexes.

It is found in the plastid. Its subcellular location is the chloroplast thylakoid membrane. May control the interaction of photosystem II (PSII) cores with the light-harvesting antenna, regulates electron flow through the 2 photosystem reaction centers. PSII is a light-driven water plastoquinone oxidoreductase, using light energy to abstract electrons from H(2)O, generating a proton gradient subsequently used for ATP formation. The polypeptide is Photosystem II reaction center protein Z (Panax ginseng (Korean ginseng)).